The sequence spans 323 residues: MKTTFLDFEQPIAELEAKIEELRFVQDDSAVDISEEIERLSKKSQQLTKDLYANLTPWQVSQIARHPQRPYTLDYVAELFTDFHELHGDRAFADDLSIVGGLARFGGHPCMVIGHQKGRDTKERAARNFGMPRPEGYRKAERLMRLAEKFGLPIFTFVDTPGAYPGIGAEERGQSEAIGRNLYVMAELKTPIITTVIGEGGSGGALAIAVADTVMMLQFSTYSVISPEGCASILWKSAAKAPEAAEALGLTAHRLKALGLIDKIINEPLGGAHRDPKGMAALLRRALADSLRQFQGMSIDALRERRFERLMAYGKFKETTPGA.

The CoA carboxyltransferase C-terminal domain occupies 39–293; sequence RLSKKSQQLT…RRALADSLRQ (255 aa).

Belongs to the AccA family. As to quaternary structure, acetyl-CoA carboxylase is a heterohexamer composed of biotin carboxyl carrier protein (AccB), biotin carboxylase (AccC) and two subunits each of ACCase subunit alpha (AccA) and ACCase subunit beta (AccD).

It localises to the cytoplasm. The enzyme catalyses N(6)-carboxybiotinyl-L-lysyl-[protein] + acetyl-CoA = N(6)-biotinyl-L-lysyl-[protein] + malonyl-CoA. It functions in the pathway lipid metabolism; malonyl-CoA biosynthesis; malonyl-CoA from acetyl-CoA: step 1/1. Its function is as follows. Component of the acetyl coenzyme A carboxylase (ACC) complex. First, biotin carboxylase catalyzes the carboxylation of biotin on its carrier protein (BCCP) and then the CO(2) group is transferred by the carboxyltransferase to acetyl-CoA to form malonyl-CoA. In Burkholderia multivorans (strain ATCC 17616 / 249), this protein is Acetyl-coenzyme A carboxylase carboxyl transferase subunit alpha.